The sequence spans 598 residues: Thiol:disulfide interchange protein DsbD (598 aa).

Residues 1-21 (MRALLTFFVAGLLVLSSPAMA) form the signal peptide. Cys130 and Cys136 are oxidised to a cystine. Residues 158 to 180 (TMPTQTASPLDTSTANTSTPQPL) form a disordered region. The segment covering 159–180 (MPTQTASPLDTSTANTSTPQPL) has biased composition (polar residues). The next 8 membrane-spanning stretches (helical) occupy residues 198–220 (LLFL…YPIL), 240–262 (LVYV…SAGL), 274–296 (LIGL…TLQL), 324–346 (AISG…LYVA), 353–375 (TGGV…VAVF), 385–407 (GWMD…FLLE), 414–431 (WSTA…GWLY), and 446–468 (AVGI…YWFA). An intrachain disulfide couples Cys212 to Cys333. The Thioredoxin domain maps to 456–598 (FASAQPALNY…FLEHIQRISN (143 aa)). A disulfide bridge links Cys513 with Cys516.

The protein belongs to the thioredoxin family. DsbD subfamily.

Its subcellular location is the cell inner membrane. It catalyses the reaction [protein]-dithiol + NAD(+) = [protein]-disulfide + NADH + H(+). The catalysed reaction is [protein]-dithiol + NADP(+) = [protein]-disulfide + NADPH + H(+). Functionally, required to facilitate the formation of correct disulfide bonds in some periplasmic proteins and for the assembly of the periplasmic c-type cytochromes. Acts by transferring electrons from cytoplasmic thioredoxin to the periplasm. This transfer involves a cascade of disulfide bond formation and reduction steps. The chain is Thiol:disulfide interchange protein DsbD from Vibrio vulnificus (strain YJ016).